We begin with the raw amino-acid sequence, 283 residues long: Pantothenate synthetase (283 aa).

An ATP-binding site is contributed by Met-30–His-37. His-37 (proton donor) is an active-site residue. A (R)-pantoate-binding site is contributed by Gln-61. Residue Gln-61 participates in beta-alanine binding. Gly-147–Asp-150 lines the ATP pocket. (R)-pantoate is bound at residue Gln-153. ATP contacts are provided by residues Ile-176 and Val-184 to Arg-187.

It belongs to the pantothenate synthetase family. As to quaternary structure, homodimer.

It is found in the cytoplasm. It carries out the reaction (R)-pantoate + beta-alanine + ATP = (R)-pantothenate + AMP + diphosphate + H(+). Its pathway is cofactor biosynthesis; (R)-pantothenate biosynthesis; (R)-pantothenate from (R)-pantoate and beta-alanine: step 1/1. Functionally, catalyzes the condensation of pantoate with beta-alanine in an ATP-dependent reaction via a pantoyl-adenylate intermediate. This chain is Pantothenate synthetase, found in Chlorobium phaeobacteroides (strain DSM 266 / SMG 266 / 2430).